Here is a 66-residue protein sequence, read N- to C-terminus: MAGQEQQSSSPREEEHEVADAPVPVPSSPQASAHTDGVDDLLDEIDGVLESNAEEFVRGFVQKGGQ.

Positions 1–10 (MAGQEQQSSS) are enriched in low complexity. The segment at 1-39 (MAGQEQQSSSPREEEHEVADAPVPVPSSPQASAHTDGVD) is disordered. An ARC ATPase binding region spans residues 23–60 (VPVPSSPQASAHTDGVDDLLDEIDGVLESNAEEFVRGF). The residue at position 66 (Q66) is a Deamidated glutamine. Q66 participates in a covalent cross-link: Isoglutamyl lysine isopeptide (Gln-Lys) (interchain with K-? in acceptor proteins).

It belongs to the prokaryotic ubiquitin-like protein family. Strongly interacts with the proteasome-associated ATPase ARC through a hydrophobic interface; the interacting region of Pup lies in its C-terminal half. There is one Pup binding site per ARC hexamer ring. Post-translationally, is modified by deamidation of its C-terminal glutamine to glutamate by the deamidase Dop, a prerequisite to the subsequent pupylation process.

The protein operates within protein degradation; proteasomal Pup-dependent pathway. In terms of biological role, protein modifier that is covalently attached to lysine residues of substrate proteins, thereby targeting them for proteasomal degradation. The tagging system is termed pupylation. The polypeptide is Prokaryotic ubiquitin-like protein Pup (Renibacterium salmoninarum (strain ATCC 33209 / DSM 20767 / JCM 11484 / NBRC 15589 / NCIMB 2235)).